The primary structure comprises 152 residues: Cyanate hydratase (152 aa).

Residues Arg98, Glu101, and Ser124 contribute to the active site.

This sequence belongs to the cyanase family.

It catalyses the reaction cyanate + hydrogencarbonate + 3 H(+) = NH4(+) + 2 CO2. Catalyzes the reaction of cyanate with bicarbonate to produce ammonia and carbon dioxide. This chain is Cyanate hydratase, found in Uncinocarpus reesii (strain UAMH 1704).